We begin with the raw amino-acid sequence, 133 residues long: Type III secretion protein HrcQb (133 aa).

Residues 1-21 (MSTEDLYQDDVEMLDDYEEPV) show a composition bias toward acidic residues. The tract at residues 1–60 (MSTEDLYQDDVEMLDDYEEPVPEQADQQQRDDEYAEHAFGYADSDAEHEEQSGDHHESPM) is disordered. Over residues 49 to 59 (EEQSGDHHESP) the composition is skewed to basic and acidic residues.

Belongs to the FliN/MopA/SpaO family. Homotetramer. The four monomers assemble into two tightly bound homodimers. Interacts with HrcQa.

The protein resides in the cytoplasm. Its function is as follows. Component of the type III secretion system, which is required for effector protein delivery, parasitism, and pathogenicity. Probably participates in the formation of a C-ring-like assembly along with HrcQa. The protein is Type III secretion protein HrcQb (hrcQb) of Pseudomonas syringae pv. syringae.